Here is a 517-residue protein sequence, read N- to C-terminus: GMP synthase [glutamine-hydrolyzing] (517 aa).

The region spanning K11–N202 is the Glutamine amidotransferase type-1 domain. C88 (nucleophile) is an active-site residue. Catalysis depends on residues H176 and E178. The 190-residue stretch at W203–R392 folds into the GMPS ATP-PPase domain. Residue S230–S236 participates in ATP binding.

As to quaternary structure, homodimer.

It catalyses the reaction XMP + L-glutamine + ATP + H2O = GMP + L-glutamate + AMP + diphosphate + 2 H(+). It functions in the pathway purine metabolism; GMP biosynthesis; GMP from XMP (L-Gln route): step 1/1. Catalyzes the synthesis of GMP from XMP. In Latilactobacillus sakei subsp. sakei (strain 23K) (Lactobacillus sakei subsp. sakei), this protein is GMP synthase [glutamine-hydrolyzing].